The chain runs to 287 residues: Small ribosomal subunit protein uS2 (287 aa).

Residues Leu-254–Ala-277 show a composition bias toward low complexity. Positions Leu-254–Ser-287 are disordered.

The protein belongs to the universal ribosomal protein uS2 family.

This is Small ribosomal subunit protein uS2 (rpsB) from Mycobacterium tuberculosis (strain CDC 1551 / Oshkosh).